A 711-amino-acid polypeptide reads, in one-letter code: DNA topoisomerase 3 (711 aa).

The region spanning 2–135 (KSLILAEKPS…IRRLWISSVT (134 aa)) is the Toprim domain. Mg(2+) is bound by residues E8 and D104. The Topo IA-type catalytic domain maps to 152–580 (YNDLYYAALA…EMKDFTKDVV (429 aa)). The interaction with DNA stretch occupies residues 186 to 191 (SLGRVQ). Y305 functions as the O-(5'-phospho-DNA)-tyrosine intermediate in the catalytic mechanism. Residues 691-711 (MNKNEGLDNNPFKDALKNLNL) form a disordered region.

The protein belongs to the type IA topoisomerase family. The cofactor is Mg(2+).

The catalysed reaction is ATP-independent breakage of single-stranded DNA, followed by passage and rejoining.. Functionally, releases the supercoiling and torsional tension of DNA, which is introduced during the DNA replication and transcription, by transiently cleaving and rejoining one strand of the DNA duplex. Introduces a single-strand break via transesterification at a target site in duplex DNA. The scissile phosphodiester is attacked by the catalytic tyrosine of the enzyme, resulting in the formation of a DNA-(5'-phosphotyrosyl)-enzyme intermediate and the expulsion of a 3'-OH DNA strand. The free DNA strand then undergoes passage around the unbroken strand, thus removing DNA supercoils. Finally, in the religation step, the DNA 3'-OH attacks the covalent intermediate to expel the active-site tyrosine and restore the DNA phosphodiester backbone. This chain is DNA topoisomerase 3, found in Staphylococcus aureus (strain Mu50 / ATCC 700699).